Here is an 89-residue protein sequence, read N- to C-terminus: Small ribosomal subunit protein uS15 (89 aa).

It belongs to the universal ribosomal protein uS15 family. As to quaternary structure, part of the 30S ribosomal subunit. Forms a bridge to the 50S subunit in the 70S ribosome, contacting the 23S rRNA.

In terms of biological role, one of the primary rRNA binding proteins, it binds directly to 16S rRNA where it helps nucleate assembly of the platform of the 30S subunit by binding and bridging several RNA helices of the 16S rRNA. Functionally, forms an intersubunit bridge (bridge B4) with the 23S rRNA of the 50S subunit in the ribosome. This is Small ribosomal subunit protein uS15 from Thermus thermophilus (strain ATCC BAA-163 / DSM 7039 / HB27).